Consider the following 300-residue polypeptide: Merozoite surface protein 2 (300 aa).

Positions 1 to 20 (MKVIKTLSIINFFIFVTFNI) are cleaved as a signal peptide. 2 N-linked (GlcNAc...) asparagine glycosylation sites follow: asparagine 22 and asparagine 36. The interval 44 to 226 (EESKPPTGAV…EQTESPELQS (183 aa)) is polymorphic region. A 1; inverted repeat occupies 51–58 (GAVAGSGA). A 7 X 8 AA tandem repeats of G-S-G-A-G-A-V-A region spans residues 51 to 74 (GAVAGSGAGAGSGAGAVAGSGAGA). Repeat copies occupy residues 61–68 (GSGAGAVA), 69–76 (GSGAGAVA), 77–84 (GSGAGAVA), 85–92 (GSGAGAVA), and 93–100 (GSGAGAVA). Residues 103–110 (GAVAGSGA) form a 7; inverted repeat. The tract at residues 111-261 (GNGANPGADA…DSQKECTDGN (151 aa)) is disordered. Positions 124–148 (PSTPATTTTTTTTNDAEASTSTSSE) are enriched in low complexity. The span at 149 to 165 (NRNHNNAETNPKGKGEV) shows a compositional bias: basic and acidic residues. Composition is skewed to polar residues over residues 167-193 (KPNQ…NVPR) and 200-228 (KSPT…QSAP). Asparagine 177 carries N-linked (GlcNAc...) asparagine glycosylation. Asparagine 249 carries N-linked (GlcNAc...) asparagine glycosylation. A disulfide bridge connects residues cysteine 257 and cysteine 265. Asparagine 273 and asparagine 274 each carry an N-linked (GlcNAc...) asparagine glycan. Asparagine 274 carries the GPI-anchor amidated asparagine lipid modification. A propeptide spans 275–300 (SSNIASINKFVVLISATLVLSFAIFI) (removed in mature form).

It localises to the cell membrane. Its function is as follows. May play a role in the merozoite attachment to the erythrocyte. This Plasmodium falciparum (isolate mad71 / Papua New Guinea) protein is Merozoite surface protein 2.